A 333-amino-acid polypeptide reads, in one-letter code: Probable tRNA pseudouridine synthase B (333 aa).

The active-site Nucleophile is the aspartate 66. A PUA domain is found at 233–308 (LKKIIVKDSA…EVVEITRVIM (76 aa)).

Belongs to the pseudouridine synthase TruB family. Type 2 subfamily.

The catalysed reaction is uridine(55) in tRNA = pseudouridine(55) in tRNA. Functionally, could be responsible for synthesis of pseudouridine from uracil-55 in the psi GC loop of transfer RNAs. The chain is Probable tRNA pseudouridine synthase B from Methanococcus maripaludis (strain C5 / ATCC BAA-1333).